Consider the following 161-residue polypeptide: Regulator of ribonuclease activity A (161 aa).

The protein belongs to the RraA family. In terms of assembly, homotrimer. Binds to both RNA-binding sites in the C-terminal region of Rne and to RhlB.

It localises to the cytoplasm. Its function is as follows. Globally modulates RNA abundance by binding to RNase E (Rne) and regulating its endonucleolytic activity. Can modulate Rne action in a substrate-dependent manner by altering the composition of the degradosome. Modulates RNA-binding and helicase activities of the degradosome. This Salmonella agona (strain SL483) protein is Regulator of ribonuclease activity A.